The chain runs to 356 residues: Glutamine synthetase (356 aa).

The GS beta-grasp domain maps to 26–105; sequence IMAEYVWVDA…VLAECWNAGG (80 aa). Positions 112–356 constitute a GS catalytic domain; sequence FRHDCVKVMD…TKALLQFSLA (245 aa).

It belongs to the glutamine synthetase family. Homooctamer.

Its subcellular location is the cytoplasm. It catalyses the reaction L-glutamate + NH4(+) + ATP = L-glutamine + ADP + phosphate + H(+). The polypeptide is Glutamine synthetase (GLN1) (Fusarium solani subsp. phaseoli (Nectria haematococca)).